The primary structure comprises 286 residues: 4-hydroxy-tetrahydrodipicolinate synthase (286 aa).

T42 is a pyruvate binding site. Y129 serves as the catalytic Proton donor/acceptor. K157 serves as the catalytic Schiff-base intermediate with substrate. V196 is a pyruvate binding site.

This sequence belongs to the DapA family. Homotetramer; dimer of dimers.

The protein localises to the cytoplasm. It carries out the reaction L-aspartate 4-semialdehyde + pyruvate = (2S,4S)-4-hydroxy-2,3,4,5-tetrahydrodipicolinate + H2O + H(+). Its pathway is amino-acid biosynthesis; L-lysine biosynthesis via DAP pathway; (S)-tetrahydrodipicolinate from L-aspartate: step 3/4. In terms of biological role, catalyzes the condensation of (S)-aspartate-beta-semialdehyde [(S)-ASA] and pyruvate to 4-hydroxy-tetrahydrodipicolinate (HTPA). In Chlamydia muridarum (strain MoPn / Nigg), this protein is 4-hydroxy-tetrahydrodipicolinate synthase.